A 135-amino-acid polypeptide reads, in one-letter code: Probable transporter XF_0766 (135 aa).

4 consecutive transmembrane segments (helical) span residues 4–24 (YWYP…LLLL), 45–65 (AQDI…SVIF), 71–91 (VTVA…GLGT), and 114–134 (IVAT…MGVY).

The protein belongs to the TsuA/YedE (TC 9.B.102) family.

The protein resides in the cell inner membrane. This Xylella fastidiosa (strain 9a5c) protein is Probable transporter XF_0766.